Reading from the N-terminus, the 365-residue chain is Chorismate synthase (365 aa).

Residues R48 and R54 each contribute to the NADP(+) site. FMN-binding positions include 131-133 (RSS), 243-244 (NA), G288, 303-307 (KPTSS), and R329.

The protein belongs to the chorismate synthase family. As to quaternary structure, homotetramer. Requires FMNH2 as cofactor.

The catalysed reaction is 5-O-(1-carboxyvinyl)-3-phosphoshikimate = chorismate + phosphate. It functions in the pathway metabolic intermediate biosynthesis; chorismate biosynthesis; chorismate from D-erythrose 4-phosphate and phosphoenolpyruvate: step 7/7. In terms of biological role, catalyzes the anti-1,4-elimination of the C-3 phosphate and the C-6 proR hydrogen from 5-enolpyruvylshikimate-3-phosphate (EPSP) to yield chorismate, which is the branch point compound that serves as the starting substrate for the three terminal pathways of aromatic amino acid biosynthesis. This reaction introduces a second double bond into the aromatic ring system. The sequence is that of Chorismate synthase from Sinorhizobium medicae (strain WSM419) (Ensifer medicae).